The following is a 254-amino-acid chain: MAAGAVAWLLLWAAWLVGRLAADFSDAPFSAGKGVRATCSEIILRQEFLKDGFHRDLLIKVKFGESIEDLQTCRLLIKHYIPPGLFVDPYELASLRERNLTEAVMLSESFNIEAPNYLSNESAVLIYARQDAQCIDCFQAFLPVHYRYHRPHKKDGDTLIVVNNPDLLMYCDQEFPILKCWAQSEVAAPCALKSEEICQWKSMQYKSILKNLTVQVPVGLTIHTSLVCSVTLLITILCSTLILLAVFKYGHFSL.

Residues 1–22 form the signal peptide; that stretch reads MAAGAVAWLLLWAAWLVGRLAA. Over 23-226 the chain is Lumenal; the sequence is DFSDAPFSAG…PVGLTIHTSL (204 aa). An N-linked (GlcNAc...) asparagine glycan is attached at N211. Residues 227–247 traverse the membrane as a helical segment; that stretch reads VCSVTLLITILCSTLILLAVF. Over 248-254 the chain is Cytoplasmic; it reads KYGHFSL.

Belongs to the PIGX family. As to quaternary structure, part of the glycosylphosphatidylinositol-mannosyltransferase I complex that is composed of PIGM and PIGX. Interacts with PIGM; PIGX stabilizes PIGM.

The protein localises to the endoplasmic reticulum membrane. It participates in glycolipid biosynthesis; glycosylphosphatidylinositol-anchor biosynthesis. In terms of biological role, stabilizing subunit of the glycosylphosphatidylinositol-mannosyltransferase I complex which catalyzes the transfer of the first mannose, via an alpha-1,4 bond from a dolichol-phosphate-mannose (Dol-P-Man) to the glucosaminyl acyl phosphatidylinositol (GlcN-(acyl)PI) intermediate to generate alpha-D-Man-(1-&gt;4)-alpha-D-GlcN-(1-&gt;6)-(1-radyl,2-acyl-sn-glycero-3-phospho)-2-acyl-inositol and participates in the sixth step of the glycosylphosphatidylinositol-anchor biosynthesis. Probably acts by stabilizing the mannosyltransferase PIGM. The polypeptide is GPI alpha-1,4-mannosyltransferase I, stabilizing subunit (Mus musculus (Mouse)).